The primary structure comprises 445 residues: Putative transcription factor bHLH056 (445 aa).

Disordered stretches follow at residues 36–70, 224–260, and 365–445; these read NQTHRQSYDPPPILRGSGSGRGEENAPLSQPPPHL, QIQPATESKLKAREETHGTEEARGSTSRKRSRTAEMH, and PFPN…QPTA. Positions 231–246 are enriched in basic and acidic residues; sequence SKLKAREETHGTEEAR. The 50-residue stretch at 255–304 folds into the bHLH domain; that stretch reads RTAEMHNLAERRRREKINEKMKTLQQLIPRCNKSTKVSTLDDAIEYVKSL. Positions 418–433 are enriched in low complexity; it reads QGQTTSQLSSGQASSS.

As to quaternary structure, homodimer.

It localises to the nucleus. The polypeptide is Putative transcription factor bHLH056 (BHLH56) (Arabidopsis thaliana (Mouse-ear cress)).